The following is a 244-amino-acid chain: Leucyl/phenylalanyl-tRNA--protein transferase (244 aa).

The protein belongs to the L/F-transferase family.

The protein resides in the cytoplasm. It carries out the reaction N-terminal L-lysyl-[protein] + L-leucyl-tRNA(Leu) = N-terminal L-leucyl-L-lysyl-[protein] + tRNA(Leu) + H(+). It catalyses the reaction N-terminal L-arginyl-[protein] + L-leucyl-tRNA(Leu) = N-terminal L-leucyl-L-arginyl-[protein] + tRNA(Leu) + H(+). The enzyme catalyses L-phenylalanyl-tRNA(Phe) + an N-terminal L-alpha-aminoacyl-[protein] = an N-terminal L-phenylalanyl-L-alpha-aminoacyl-[protein] + tRNA(Phe). Functions in the N-end rule pathway of protein degradation where it conjugates Leu, Phe and, less efficiently, Met from aminoacyl-tRNAs to the N-termini of proteins containing an N-terminal arginine or lysine. In Thermodesulfovibrio yellowstonii (strain ATCC 51303 / DSM 11347 / YP87), this protein is Leucyl/phenylalanyl-tRNA--protein transferase.